A 418-amino-acid polypeptide reads, in one-letter code: Delta(14)-sterol reductase TM7SF2 (418 aa).

6 helical membrane-spanning segments follow: residues 13 to 35, 62 to 81, 102 to 124, 129 to 148, 255 to 277, and 287 to 304; these read FGGP…HLLL, ALLL…LLPA, GFQA…LPLG, MLLP…SLFL, FGFM…QAQF, and LPMA…YYIF. Residues Lys-311, Arg-315, Leu-338, Trp-343, and 350–351 contribute to the NADP(+) site; that span reads NY. A helical membrane pass occupies residues 355–377; that stretch reads LIMALAWSLPCGVSHLLPYFYLL. Residues Asp-390, 394–398, and Tyr-405 each bind NADP(+); that span reads CLQKY.

The protein belongs to the ERG4/ERG24 family. As to expression, expressed in adult heart, brain, pancreas, lung, liver, skeletal muscle, kidney, ovary, prostate, testis and adrenal gland, but not detected in placenta, spleen, thymus, small intestine, colon (mucosal lining), or peripheral blood leukocytes.

Its subcellular location is the microsome membrane. It localises to the endoplasmic reticulum membrane. It catalyses the reaction 4,4-dimethyl-5alpha-cholesta-8,24-dien-3beta-ol + NADP(+) = 4,4-dimethyl-5alpha-cholesta-8,14,24-trien-3beta-ol + NADPH + H(+). It carries out the reaction 5alpha-cholest-8,14-dien-3beta-ol + NADPH + H(+) = 5alpha-cholest-8-en-3beta-ol + NADP(+). The catalysed reaction is 4,4-dimethyl-8,14-cholestadien-3beta-ol + NADPH + H(+) = 4,4-dimethyl-5alpha-cholest-8-en-3beta-ol + NADP(+). It functions in the pathway steroid biosynthesis; cholesterol biosynthesis. Its function is as follows. Catalyzes the reduction of the C14-unsaturated bond of lanosterol, as part of the metabolic pathway leading to cholesterol biosynthesis. This is Delta(14)-sterol reductase TM7SF2 (TM7SF2) from Homo sapiens (Human).